A 769-amino-acid chain; its full sequence is 5-methyltetrahydropteroyltriglutamate--homocysteine methyltransferase (769 aa).

5-methyltetrahydropteroyltri-L-glutamate contacts are provided by residues 16 to 19 (RELK) and Lys-118. L-homocysteine contacts are provided by residues 440–442 (IGS) and Glu-493. Residues 440–442 (IGS) and Glu-493 contribute to the L-methionine site. 5-methyltetrahydropteroyltri-L-glutamate is bound by residues 524-525 (RC) and Trp-570. Position 608 (Asp-608) interacts with L-homocysteine. Asp-608 provides a ligand contact to L-methionine. Glu-614 provides a ligand contact to 5-methyltetrahydropteroyltri-L-glutamate. Zn(2+) is bound by residues His-650, Cys-652, and Glu-674. His-706 (proton donor) is an active-site residue. Cys-738 contacts Zn(2+).

It belongs to the vitamin-B12 independent methionine synthase family. It depends on Zn(2+) as a cofactor.

The enzyme catalyses 5-methyltetrahydropteroyltri-L-glutamate + L-homocysteine = tetrahydropteroyltri-L-glutamate + L-methionine. It participates in amino-acid biosynthesis; L-methionine biosynthesis via de novo pathway; L-methionine from L-homocysteine (MetE route): step 1/1. Its function is as follows. Catalyzes the transfer of a methyl group from 5-methyltetrahydrofolate to homocysteine resulting in methionine formation. This Acidiphilium cryptum (strain JF-5) protein is 5-methyltetrahydropteroyltriglutamate--homocysteine methyltransferase.